Here is a 158-residue protein sequence, read N- to C-terminus: Large ribosomal subunit protein uL11 (158 aa).

It belongs to the universal ribosomal protein uL11 family. In terms of assembly, part of the ribosomal stalk of the 50S ribosomal subunit. Interacts with L10 and the large rRNA to form the base of the stalk. L10 forms an elongated spine to which L12 dimers bind in a sequential fashion forming a multimeric L10(L12)X complex.

In terms of biological role, forms part of the ribosomal stalk which helps the ribosome interact with GTP-bound translation factors. The sequence is that of Large ribosomal subunit protein uL11 from Methanospirillum hungatei JF-1 (strain ATCC 27890 / DSM 864 / NBRC 100397 / JF-1).